Here is a 37-residue protein sequence, read N- to C-terminus: Ice-structuring protein 3 (37 aa).

It belongs to the type-I AFP family.

In terms of biological role, contributes to protect fish blood from freezing at subzero sea water temperatures. Lowers the blood freezing point. Binds to nascent ice crystals and prevents further growth. This chain is Ice-structuring protein 3, found in Pseudopleuronectes americanus (Winter flounder).